A 379-amino-acid chain; its full sequence is 1-deoxy-D-xylulose 5-phosphate reductoisomerase (379 aa).

Thr10, Gly11, Ser12, Ile13, Gly36, Asn38, and Asn121 together coordinate NADPH. Lys122 provides a ligand contact to 1-deoxy-D-xylulose 5-phosphate. Position 123 (Glu123) interacts with NADPH. Mn(2+) is bound at residue Asp147. Ser148, Glu149, Ser173, and His196 together coordinate 1-deoxy-D-xylulose 5-phosphate. Glu149 contributes to the Mn(2+) binding site. Residue Gly202 participates in NADPH binding. Residues Ser209, Asn214, Lys215, and Glu218 each coordinate 1-deoxy-D-xylulose 5-phosphate. Glu218 is a Mn(2+) binding site.

It belongs to the DXR family. Mg(2+) is required as a cofactor. Mn(2+) serves as cofactor.

The enzyme catalyses 2-C-methyl-D-erythritol 4-phosphate + NADP(+) = 1-deoxy-D-xylulose 5-phosphate + NADPH + H(+). Its pathway is isoprenoid biosynthesis; isopentenyl diphosphate biosynthesis via DXP pathway; isopentenyl diphosphate from 1-deoxy-D-xylulose 5-phosphate: step 1/6. Its function is as follows. Catalyzes the NADPH-dependent rearrangement and reduction of 1-deoxy-D-xylulose-5-phosphate (DXP) to 2-C-methyl-D-erythritol 4-phosphate (MEP). The protein is 1-deoxy-D-xylulose 5-phosphate reductoisomerase of Shouchella clausii (strain KSM-K16) (Alkalihalobacillus clausii).